The chain runs to 1057 residues: MKKVGTGQKRNRSIFRFSTLAFAIHAVSMGGLVVLPMQQAYAQTAGVKSYNIPAGRLANVLNQFAEQSGTSIAMDAQQLQGLHSLGLKGNFAVEQGFEQLLKSTEFNAVKVGQGYTLSKKSTPRVISSKVQATSLPPSSAVIEEDASVRLTPIVVYGKEDRDTEGYNKVYDANRSSVYAGKDYVERFKGTNPADVLQGMVGVYSGDARNSGALDPSVRGVQGVGRVPLTIDGTEQSIAVWRGYNGVNNRNYIDPNLIAGIEVIKGPSLERNTTTSVGGAVVVKTLEADDIVRPGKSFGAELKVEGSTNSIDPSLPDMSKVGQNYDDTTPWIDMNGSKYDPDIYKKNRTRSDNSHFSGDDLAGRLAIATKQDKFDLLAVYAVRERGNYFSGTHGAGYYKRATPDSSLDFIPYFAYAYQPGDEVPNTSSHMESWLLKGTYRPTDDQTLKLTYRDTKNIFGEIMPSRIVWGITPDLGVPQWPLSNIHSKAYSLEYKFKPENNRWIDFYANIWQTDTESQTYTRGGWPTTIDFRDNTIINTAISHSDNTRKGITVSNKTRLLDQLDLTLGGSFLKEKLTSDDVYGEFGPSYSLYQALPRAGRREEKTFDFNFNYRPVSWLSFDAGMRYRSYWAIDDFLNKSLQSEIDPSLNPLFTKKSRLKEYTFEYQTMPESYTSTQQRLINVLKQRYATKNPEWDGQLDTVPASESTLYNMIWSQKNTLSWKADANGQLSLADNPLNQLNASGQKYVVTGGNFMSVVDQVPVESADKVKDSGWAPQLGASIHLTPNSRIYARYAEEYRLPSLFESTVGFSAMLQYQAIKPEHAFNYEVGYVYDMRDWFSTARNADIKLAYYYNKTKNVIERDQNLIFTNMDEQKLSGLELQSRFDNGGFFTDLSVAYNLKNEVCDTNSAINKMILGGTVQTEQGLEFREPYQRCVDDGFPNGYLVTMATPELSFHGLLGARFFDEKLELGARATFYKAYESPLRKNNDASVNKGYYLNVPLAWDDTWIFDAYARYQVDDYNTVEFVGSNLSNQFYIDPLTRSAMAAPGRTMKISWTTKF.

Residues 168–285 (KVYDANRSSV…VGGAVVVKTL (118 aa)) enclose the TBDR plug domain. A TBDR beta-barrel domain is found at 296–1057 (SFGAELKVEG…TMKISWTTKF (762 aa)).

Belongs to the TonB-dependent receptor family.

The protein resides in the cell outer membrane. Part of a high affinity heme acquisition system. Functions as a gateway for heme entry into the bacterial cell, enabling growth on hemoprotein sources. Can acquire heme directly from hemoprotein reservoirs, however, HphA likely enhances the efficiency of this process by delivering heme to HphR. Is essential for virulence, bacterial dissemination and growth in the blood. The sequence is that of Hemophilin receptor from Acinetobacter baumannii.